We begin with the raw amino-acid sequence, 138 residues long: Cysteine desulfuration protein SufE (138 aa).

Cysteine 51 (cysteine persulfide intermediate) is an active-site residue.

This sequence belongs to the SufE family. In terms of assembly, homodimer. Interacts with SufS.

Its subcellular location is the cytoplasm. Its pathway is cofactor biosynthesis; iron-sulfur cluster biosynthesis. Its function is as follows. Participates in cysteine desulfuration mediated by SufS. Cysteine desulfuration mobilizes sulfur from L-cysteine to yield L-alanine and constitutes an essential step in sulfur metabolism for biosynthesis of a variety of sulfur-containing biomolecules. Functions as a sulfur acceptor for SufS, by mediating the direct transfer of the sulfur atom from the S-sulfanylcysteine of SufS, an intermediate product of cysteine desulfuration process. This is Cysteine desulfuration protein SufE from Escherichia coli (strain K12 / MC4100 / BW2952).